Reading from the N-terminus, the 169-residue chain is Peptide deformylase (169 aa).

Fe cation is bound by residues C91 and H133. Residue E134 is part of the active site. H137 provides a ligand contact to Fe cation.

This sequence belongs to the polypeptide deformylase family. Fe(2+) is required as a cofactor.

The catalysed reaction is N-terminal N-formyl-L-methionyl-[peptide] + H2O = N-terminal L-methionyl-[peptide] + formate. Its function is as follows. Removes the formyl group from the N-terminal Met of newly synthesized proteins. Requires at least a dipeptide for an efficient rate of reaction. N-terminal L-methionine is a prerequisite for activity but the enzyme has broad specificity at other positions. In Shigella boydii serotype 18 (strain CDC 3083-94 / BS512), this protein is Peptide deformylase.